The chain runs to 219 residues: C-type lectin domain family 4 member E (219 aa).

Residues 1–19 (MNSSKSSETQCTERGCFSS) lie on the Cytoplasmic side of the membrane. A helical; Signal-anchor for type II membrane protein transmembrane segment spans residues 20 to 40 (QMFLWTVAGIPILFLSACFIT). Residues 41–219 (RCVVTFRIFQ…INPLNKGKSL (179 aa)) are Extracellular-facing. Residue Asn62 is glycosylated (N-linked (GlcNAc...) asparagine). Cys80 and Cys91 are joined by a disulfide. The region spanning 87 to 206 (FQSSCYFFST…CFLNYFRICE (120 aa)) is the C-type lectin domain. N-linked (GlcNAc...) asparagine glycosylation is present at Asn107. Disulfide bonds link Cys108/Cys205 and Cys179/Cys197. Ca(2+) contacts are provided by Val117, Asn119, Glu123, Glu169, Asn171, Asn193, Asp194, and Glu206. A Confers specificity for glucose/mannose-type carbohydrates motif is present at residues 169–171 (EPN).

In terms of assembly, monomer and homodimer. Interacts with signaling adapter Fc receptor gamma chain/FCER1G to form a functional complex; the interaction is direct. Alternatively, acts as a bridge for interaction between CLEC4D and FCER1G. A heterodimer of CLEC4E and CLEC4D associates with FCER1G to form a functional complex. Interacts with SAP130 nuclear protein that is released from necrotic cells; the interaction is direct. As to expression, expressed in monocytes and macrophages.

It is found in the cell membrane. It localises to the cell projection. The protein resides in the phagocytic cup. Calcium-dependent lectin that acts as a pattern recognition receptor (PRR) of the innate immune system: recognizes damage-associated molecular patterns (DAMPs) of abnormal self and pathogen-associated molecular patterns (PAMPs) of bacteria and fungi. The PAMPs notably include mycobacterial trehalose 6,6'-dimycolate (TDM), a cell wall glycolipid with potent adjuvant immunomodulatory functions. Interacts with signaling adapter Fc receptor gamma chain/FCER1G to form a functional complex in myeloid cells. Binding of mycobacterial trehalose 6,6'-dimycolate (TDM) to this receptor complex leads to phosphorylation of the immunoreceptor tyrosine-based activation motif (ITAM) of FCER1G, triggering activation of SYK, CARD9 and NF-kappa-B, consequently driving maturation of antigen-presenting cells and shaping antigen-specific priming of T-cells toward effector T-helper 1 and T-helper 17 cell subtypes. Also recognizes alpha-mannose residues on pathogenic fungi of the genus Malassezia and mediates macrophage activation. Through recognition of DAMPs released upon nonhomeostatic cell death, enables immune sensing of damaged self and promotes inflammatory cell infiltration into the damaged tissue. The polypeptide is C-type lectin domain family 4 member E (Homo sapiens (Human)).